The following is a 335-amino-acid chain: tRNA N6-adenosine threonylcarbamoyltransferase (335 aa).

Fe cation is bound by residues histidine 111 and histidine 115. Residues 133–137 (LISGG), aspartate 166, glycine 179, and asparagine 276 each bind substrate. Aspartate 301 contacts Fe cation.

The protein belongs to the KAE1 / TsaD family. Fe(2+) is required as a cofactor.

Its subcellular location is the cytoplasm. It carries out the reaction L-threonylcarbamoyladenylate + adenosine(37) in tRNA = N(6)-L-threonylcarbamoyladenosine(37) in tRNA + AMP + H(+). Its function is as follows. Required for the formation of a threonylcarbamoyl group on adenosine at position 37 (t(6)A37) in tRNAs that read codons beginning with adenine. Is involved in the transfer of the threonylcarbamoyl moiety of threonylcarbamoyl-AMP (TC-AMP) to the N6 group of A37, together with TsaE and TsaB. TsaD likely plays a direct catalytic role in this reaction. The chain is tRNA N6-adenosine threonylcarbamoyltransferase from Wolbachia sp. subsp. Drosophila simulans (strain wRi).